Consider the following 94-residue polypeptide: Co-chaperonin GroES (94 aa).

This sequence belongs to the GroES chaperonin family. As to quaternary structure, heptamer of 7 subunits arranged in a ring. Interacts with the chaperonin GroEL.

It localises to the cytoplasm. In terms of biological role, together with the chaperonin GroEL, plays an essential role in assisting protein folding. The GroEL-GroES system forms a nano-cage that allows encapsulation of the non-native substrate proteins and provides a physical environment optimized to promote and accelerate protein folding. GroES binds to the apical surface of the GroEL ring, thereby capping the opening of the GroEL channel. This chain is Co-chaperonin GroES, found in Streptococcus pneumoniae (strain ATCC BAA-255 / R6).